A 1915-amino-acid chain; its full sequence is Cysteine repeat modular protein 2 (1915 aa).

The first 23 residues, 1–23 (MKFKKELINILALIFVLKKNIFA), serve as a signal peptide directing secretion. 5 FU repeats span residues 53–98 (LGLC…QTYV), 104–151 (SCIC…GYTQ), 161–208 (QLLC…LQYK), 210–263 (NGIC…GYVV), and 267–315 (TQRC…GNYQ). N-linked (GlcNAc...) asparagine glycosylation is present at Asn138. Residues Asn274, Asn279, and Asn316 are each glycosylated (N-linked (GlcNAc...) asparagine). FU repeat units follow at residues 317 to 362 (SSLC…GFYT), 373 to 422 (QPIC…QTYY), 427 to 492 (TRSC…GFYQ), 496 to 546 (NNSC…SQNN), and 554 to 602 (TQAC…GTYM). An N-linked (GlcNAc...) asparagine glycan is attached at Asn409. N-linked (GlcNAc...) asparagine glycans are attached at residues Asn496, Asn572, Asn603, and Asn621. FU repeat units follow at residues 606–639 (TNQCSLCGFGCSSCTNGTFNSCISCLNGYYLQQN), 640–686 (YNVC…GFYV), and 690–739 (QQAC…NECL). N-linked (GlcNAc...) asparagine glycosylation occurs at Asn742. 2 FU repeats span residues 760 to 814 (DGQC…GFYY) and 818 to 865 (NKQC…GYYQ). N-linked (GlcNAc...) asparagine glycosylation is found at Asn909, Asn930, Asn1051, Asn1085, and Asn1193. The EGF-like domain occupies 1184–1224 (VQIPCDSNINCSGNGKCLWSQDNYNEILCICNINYAGRYCE). Cystine bridges form between Cys1188–Cys1200, Cys1194–Cys1212, and Cys1214–Cys1223. Asn1250, Asn1297, Asn1519, Asn1546, Asn1554, Asn1580, and Asn1596 each carry an N-linked (GlcNAc...) asparagine glycan. The next 5 membrane-spanning stretches (helical) occupy residues 1599–1619 (LLYALLIYIIFITIFIVISII), 1662–1682 (YAQLIINLFLYNAIFVLVYSL), 1704–1724 (STSVACSIVTYYLTICMVNLF), 1763–1783 (GLVFMLQAGMGIPIIILILSF), and 1796–1816 (FASFVIDNILDIIILISFCFI). Asn1867 carries N-linked (GlcNAc...) asparagine glycosylation.

It localises to the membrane. In terms of biological role, required for mucocyst secretion. This Tetrahymena thermophila (strain SB210) protein is Cysteine repeat modular protein 2.